A 303-amino-acid chain; its full sequence is Uricase (303 aa).

Ala-2 carries the post-translational modification N-acetylalanine. An N6-acetyllysine; alternate mark is found at Lys-10 and Lys-23. Lys-10 and Lys-23 each carry N6-succinyllysine; alternate. Lys-23 functions as the Charge relay system in the catalytic mechanism. 2 positions are modified to N6-acetyllysine: Lys-27 and Lys-36. A phosphoserine mark is found at Ser-39 and Ser-63. The active-site Charge relay system is the Thr-68. Urate contacts are provided by Thr-68 and Asp-69. Residues Lys-118, Lys-122, and Lys-164 each carry the N6-acetyllysine modification. Residue Phe-170 coordinates urate. N6-acetyllysine occurs at positions 175 and 185. Arg-187 serves as a coordination point for urate. Lys-220 is subject to N6-acetyllysine; alternate. Position 220 is an N6-succinyllysine; alternate (Lys-220). Phosphoserine is present on Ser-231. Urate contacts are provided by Val-234, Gln-235, and Asn-261. Catalysis depends on His-263, which acts as the Charge relay system. Lys-277 is modified (N6-acetyllysine). Residue Tyr-288 is modified to Phosphotyrosine. A Microbody targeting signal motif is present at residues 301–303 (SRL).

It belongs to the uricase family. As to expression, expressed in liver. Not detected in other tissues tested.

It is found in the peroxisome. It catalyses the reaction urate + O2 + H2O = 5-hydroxyisourate + H2O2. The protein operates within purine metabolism; urate degradation; (S)-allantoin from urate: step 1/3. Competitively inhibited by xanthine. Catalyzes the oxidation of uric acid to 5-hydroxyisourate, which is further processed to form (S)-allantoin. The chain is Uricase (Uox) from Rattus norvegicus (Rat).